The sequence spans 644 residues: Threonine--tRNA ligase (644 aa).

Residues 1–61 (MNVTIEGQVF…ADTTTIEPVF (61 aa)) enclose the TGS domain. A catalytic region spans residues 241–532 (DHRKLGQQLD…LTEHFAGAFP (292 aa)). The Zn(2+) site is built by Cys333, His384, and His509.

Belongs to the class-II aminoacyl-tRNA synthetase family. As to quaternary structure, homodimer. The cofactor is Zn(2+).

The protein resides in the cytoplasm. The catalysed reaction is tRNA(Thr) + L-threonine + ATP = L-threonyl-tRNA(Thr) + AMP + diphosphate + H(+). Catalyzes the attachment of threonine to tRNA(Thr) in a two-step reaction: L-threonine is first activated by ATP to form Thr-AMP and then transferred to the acceptor end of tRNA(Thr). Also edits incorrectly charged L-seryl-tRNA(Thr). The chain is Threonine--tRNA ligase from Nitratidesulfovibrio vulgaris (strain DSM 19637 / Miyazaki F) (Desulfovibrio vulgaris).